Here is a 61-residue protein sequence, read N- to C-terminus: Small ribosomal subunit protein uS14 (61 aa).

Zn(2+) is bound by residues Cys-24, Cys-27, Cys-40, and Cys-43.

The protein belongs to the universal ribosomal protein uS14 family. Zinc-binding uS14 subfamily. Part of the 30S ribosomal subunit. Contacts proteins S3 and S10. Requires Zn(2+) as cofactor.

In terms of biological role, binds 16S rRNA, required for the assembly of 30S particles and may also be responsible for determining the conformation of the 16S rRNA at the A site. In Mycobacterium leprae (strain Br4923), this protein is Small ribosomal subunit protein uS14.